A 157-amino-acid polypeptide reads, in one-letter code: 6,7-dimethyl-8-ribityllumazine synthase (157 aa).

Residues Phe22, 57–59, and 81–83 contribute to the 5-amino-6-(D-ribitylamino)uracil site; these read AYE and TVI. Residue 86 to 87 participates in (2S)-2-hydroxy-3-oxobutyl phosphate binding; it reads GT. The active-site Proton donor is the His89. Phe114 serves as a coordination point for 5-amino-6-(D-ribitylamino)uracil. Residue Arg128 coordinates (2S)-2-hydroxy-3-oxobutyl phosphate.

It belongs to the DMRL synthase family. As to quaternary structure, forms an icosahedral capsid composed of 60 subunits, arranged as a dodecamer of pentamers.

The catalysed reaction is (2S)-2-hydroxy-3-oxobutyl phosphate + 5-amino-6-(D-ribitylamino)uracil = 6,7-dimethyl-8-(1-D-ribityl)lumazine + phosphate + 2 H2O + H(+). It functions in the pathway cofactor biosynthesis; riboflavin biosynthesis; riboflavin from 2-hydroxy-3-oxobutyl phosphate and 5-amino-6-(D-ribitylamino)uracil: step 1/2. Functionally, catalyzes the formation of 6,7-dimethyl-8-ribityllumazine by condensation of 5-amino-6-(D-ribitylamino)uracil with 3,4-dihydroxy-2-butanone 4-phosphate. This is the penultimate step in the biosynthesis of riboflavin. The polypeptide is 6,7-dimethyl-8-ribityllumazine synthase (Haemophilus influenzae (strain 86-028NP)).